The chain runs to 297 residues: Virulence genes transcriptional activator (297 aa).

The region spanning 1–61 (MDFLINKKLK…IRKNGTLIPT (61 aa)) is the HTH lysR-type domain. The segment at residues 21–40 (FSIATSVLYITRTPLSRVIS) is a DNA-binding region (H-T-H motif).

It belongs to the LysR transcriptional regulatory family.

It is found in the cytoplasm. Positive regulator for the plasmid-encoded virulence factors SpvA, SpvB, and SpvC. This is Virulence genes transcriptional activator (mkaC) from Salmonella typhimurium (strain LT2 / SGSC1412 / ATCC 700720).